Reading from the N-terminus, the 199-residue chain is Ribonuclease HII (199 aa).

The RNase H type-2 domain maps to 9-198 (QFVAGVDEVG…VRAAIEQMNL (190 aa)). The a divalent metal cation site is built by aspartate 15, glutamate 16, and aspartate 107.

It belongs to the RNase HII family. Mn(2+) serves as cofactor. Requires Mg(2+) as cofactor.

It is found in the cytoplasm. The enzyme catalyses Endonucleolytic cleavage to 5'-phosphomonoester.. Functionally, endonuclease that specifically degrades the RNA of RNA-DNA hybrids. In Saccharophagus degradans (strain 2-40 / ATCC 43961 / DSM 17024), this protein is Ribonuclease HII.